The primary structure comprises 564 residues: Phosphoinositide phospholipase C 3 (564 aa).

The region spanning 19–54 (TRQPPVSIKRLFEAYSRNGKMSFDELLRFVSEVQGE) is the EF-hand domain. The PI-PLC X-box domain maps to 106–250 (HDMKAPLSHY…LKGKILISTK (145 aa)). Active-site residues include histidine 121 and histidine 167. Positions 296 to 412 (RDLIAIHAAN…GYVKKPRILL (117 aa)) constitute a PI-PLC Y-box domain. The C2 domain maps to 406–539 (KKPRILLDEH…KSGVRAVRLH (134 aa)). Positions 450, 456, 509, 511, and 517 each coordinate Ca(2+).

It depends on Ca(2+) as a cofactor. Expressed in leaves, roots and siliques, but not in flowers.

Its subcellular location is the cell membrane. The catalysed reaction is a 1,2-diacyl-sn-glycero-3-phospho-(1D-myo-inositol-4,5-bisphosphate) + H2O = 1D-myo-inositol 1,4,5-trisphosphate + a 1,2-diacyl-sn-glycerol + H(+). Functionally, the production of the second messenger molecules diacylglycerol (DAG) and inositol 1,4,5-trisphosphate (IP3) is mediated by activated phosphatidylinositol-specific phospholipase C enzymes. The polypeptide is Phosphoinositide phospholipase C 3 (PLC3) (Arabidopsis thaliana (Mouse-ear cress)).